A 57-amino-acid chain; its full sequence is Phosphatase RapH inhibitor (57 aa).

Propeptides lie at residues 1–34 and 41–57; these read MPIK…FKES and YIDH…KALS. The interval 26 to 57 is disordered; that stretch reads TNSGGFKESTDRNTTYIDHSPYKLSDQKKALS.

It belongs to the Phr family. Post-translationally, contains a predicted signal peptide cleavage site in the N-terminal region, however the propeptide is probably only subject to processing events at the ends of the mature peptide.

The protein localises to the secreted. Its subcellular location is the cytoplasm. In terms of biological role, signaling molecule involved the regulation of both sporulation and competence. Secreted during production, but the mature peptide acts intracellularly, indicating that it needs to be imported into the cell to function. Acts by inhibiting RapH activity. Can inhibit both RapH activities, the dephosphorylation of Spo0F and the sequestration of ComA. The sequence is that of Phosphatase RapH inhibitor (phrH) from Bacillus subtilis (strain 168).